We begin with the raw amino-acid sequence, 391 residues long: Dual-specificity RNA methyltransferase RlmN (391 aa).

Residues M1–I20 are disordered. Over residues T10–I20 the composition is skewed to basic and acidic residues. E120 serves as the catalytic Proton acceptor. In terms of domain architecture, Radical SAM core spans D126–D366. A disulfide bond links C133 and C371. [4Fe-4S] cluster contacts are provided by C140, C144, and C147. Residues G195 to E196, S227, S249 to H251, and N328 each bind S-adenosyl-L-methionine. C371 functions as the S-methylcysteine intermediate in the catalytic mechanism.

The protein belongs to the radical SAM superfamily. RlmN family. It depends on [4Fe-4S] cluster as a cofactor.

It is found in the cytoplasm. The enzyme catalyses adenosine(2503) in 23S rRNA + 2 reduced [2Fe-2S]-[ferredoxin] + 2 S-adenosyl-L-methionine = 2-methyladenosine(2503) in 23S rRNA + 5'-deoxyadenosine + L-methionine + 2 oxidized [2Fe-2S]-[ferredoxin] + S-adenosyl-L-homocysteine. It carries out the reaction adenosine(37) in tRNA + 2 reduced [2Fe-2S]-[ferredoxin] + 2 S-adenosyl-L-methionine = 2-methyladenosine(37) in tRNA + 5'-deoxyadenosine + L-methionine + 2 oxidized [2Fe-2S]-[ferredoxin] + S-adenosyl-L-homocysteine. Specifically methylates position 2 of adenine 2503 in 23S rRNA and position 2 of adenine 37 in tRNAs. m2A2503 modification seems to play a crucial role in the proofreading step occurring at the peptidyl transferase center and thus would serve to optimize ribosomal fidelity. The sequence is that of Dual-specificity RNA methyltransferase RlmN from Zymomonas mobilis subsp. mobilis (strain ATCC 31821 / ZM4 / CP4).